The following is a 176-amino-acid chain: Nucleoside triphosphate/diphosphate phosphatase (176 aa).

The Proton donor role is filled by R23. Residues N87, D103, D105, D107, D120, and E123 each coordinate Mg(2+).

It belongs to the Ntdp family. Requires Mg(2+) as cofactor.

It carries out the reaction a ribonucleoside 5'-triphosphate + H2O = a ribonucleoside 5'-diphosphate + phosphate + H(+). The catalysed reaction is a ribonucleoside 5'-diphosphate + H2O = a ribonucleoside 5'-phosphate + phosphate + H(+). In terms of biological role, has nucleoside phosphatase activity towards nucleoside triphosphates and nucleoside diphosphates. The chain is Nucleoside triphosphate/diphosphate phosphatase (ygaC) from Bacillus subtilis (strain 168).